Reading from the N-terminus, the 260-residue chain is 3-deoxy-manno-octulosonate cytidylyltransferase (260 aa).

Belongs to the KdsB family.

The protein resides in the cytoplasm. The catalysed reaction is 3-deoxy-alpha-D-manno-oct-2-ulosonate + CTP = CMP-3-deoxy-beta-D-manno-octulosonate + diphosphate. It functions in the pathway nucleotide-sugar biosynthesis; CMP-3-deoxy-D-manno-octulosonate biosynthesis; CMP-3-deoxy-D-manno-octulosonate from 3-deoxy-D-manno-octulosonate and CTP: step 1/1. It participates in bacterial outer membrane biogenesis; lipopolysaccharide biosynthesis. Functionally, activates KDO (a required 8-carbon sugar) for incorporation into bacterial lipopolysaccharide in Gram-negative bacteria. This is 3-deoxy-manno-octulosonate cytidylyltransferase from Polaromonas naphthalenivorans (strain CJ2).